The following is a 177-amino-acid chain: Interleukin-25 (177 aa).

The N-terminal stretch at 1–32 (MRERPRLGEDSSLISLFLQVVAFLAMVMGTHT) is a signal peptide. The interval 58 to 81 (PVPPLEPARPNRHPESCRASEDGP) is disordered. Positions 69-78 (RHPESCRASE) are enriched in basic and acidic residues. 2 disulfides stabilise this stretch: Cys-110/Cys-168 and Cys-115/Cys-170. The N-linked (GlcNAc...) asparagine glycan is linked to Asn-136.

The protein belongs to the IL-17 family. Expressed at low levels in several tissues, including brain, kidney, lung, prostate, testis, spinal cord, adrenal gland, and trachea.

Its subcellular location is the secreted. Its function is as follows. Cytokine produced by various cells such as eosinophils, T-helper type 2 (Th2) cells or epithelial cells that plays a role in internal safety of adaptive immune responses by regulating cytokine production. Promotes and augments T-helper type 2 responses locally or systemically. Exerts its activity via its receptor composed of IL17RA and IL17RB for signal transduction. In turn, stimulates the JAK2-STAT5A pathway and promotes the secretion of type-2 associated cytokines including IL4, IL9 and IL13. Also induces the release of IL8, and IL6 from eosinophils through the combined activation of MAPK and NF-kappa-B pathways. Inhibits the differentiation of T-helper (Th17) cells via the production of IL4, IL5 and IL13. The polypeptide is Interleukin-25 (IL25) (Homo sapiens (Human)).